A 223-amino-acid polypeptide reads, in one-letter code: Peptidyl-prolyl cis-trans isomerase FKBP16-3, chloroplastic (223 aa).

Residues 1–36 (MAASSPSLLLPLGSASRNGLTTKNPNSSRYIAARVI) constitute a chloroplast transit peptide. The N-terminal 40 residues, 37–76 (ASETREQSCKISNLSSRREAMLLVLGVSGGLSMSSLAAYA), are a transit peptide targeting the thylakoid. The region spanning 124-216 (GFQVAANYVA…IFDVSLEFIP (93 aa)) is the PPIase FKBP-type domain.

The protein belongs to the FKBP-type PPIase family.

It localises to the plastid. It is found in the chloroplast thylakoid lumen. The enzyme catalyses [protein]-peptidylproline (omega=180) = [protein]-peptidylproline (omega=0). Functionally, PPIases accelerate the folding of proteins. It catalyzes the cis-trans isomerization of proline imidic peptide bonds in oligopeptides. In Arabidopsis thaliana (Mouse-ear cress), this protein is Peptidyl-prolyl cis-trans isomerase FKBP16-3, chloroplastic (FKBP16-3).